Reading from the N-terminus, the 374-residue chain is Pre-B-cell leukemia transcription factor 4 (374 aa).

The PBC domain occupies 14-209 (PRRLDTSDVL…VMTLRSRLLD (196 aa)). Positions 21–100 (DVLQQIMAIT…EGVCRPEKRG (80 aa)) are PBC-A. The tract at residues 103–209 (GAVARAGTAT…VMTLRSRLLD (107 aa)) is PBC-B. Residues 210–272 (ARRKRRNFSK…NKRIRYKKNM (63 aa)) constitute a DNA-binding region (homeobox; TALE-type). The segment at 333–374 (QPPPGGGCLQSQAQGSWQGATPQPATASPAGDPGSINSSTSN) is disordered. The span at 341 to 358 (LQSQAQGSWQGATPQPAT) shows a compositional bias: polar residues.

Belongs to the TALE/PBX homeobox family.

It is found in the nucleus. The chain is Pre-B-cell leukemia transcription factor 4 (PBX4) from Homo sapiens (Human).